A 790-amino-acid chain; its full sequence is Sorting nexin mvp1 (790 aa).

Polar residues-rich tracts occupy residues 1 to 10 and 20 to 40; these read MSLFGSSPPN and KTANSSRSTLFDNEAPTTRSG. Disordered stretches follow at residues 1-62, 215-342, and 373-406; these read MSLF…RKQR, PNLS…SIHN, and AITGPFGDSGGPGQSVSGSVGGSNPNRSIGHVRS. Pro residues predominate over residues 225–240; that stretch reads PQRPVTPPKAPTPSPP. The segment covering 241–252 has biased composition (low complexity); sequence KQQQQQQHQPPT. The segment covering 269–283 has biased composition (basic and acidic residues); the sequence is DLHKGHNHGPLEHST. The span at 297–319 shows a compositional bias: polar residues; that stretch reads NDLNGNDAVSYSTSPEVTTTSSA. Low complexity-rich tracts occupy residues 324-339 and 386-400; these read TTSTFTTSQPPSGPSS and QSVSGSVGGSNPNRS. Residues 411–525 enclose the PX domain; it reads EENILVTLMP…IMFLTVPTEL (115 aa). Residues Arg447, Ser449, Lys473, and Arg492 each contribute to the a 1,2-diacyl-sn-glycero-3-phospho-(1D-myo-inositol-3-phosphate) site.

It belongs to the sorting nexin family.

The protein localises to the cytoplasm. It is found in the membrane. Functionally, required for vacuolar protein sorting. This Neurospora crassa (strain ATCC 24698 / 74-OR23-1A / CBS 708.71 / DSM 1257 / FGSC 987) protein is Sorting nexin mvp1 (vsp-1).